Reading from the N-terminus, the 464-residue chain is 17,18-epoxy-17-hydroxycur-19-ene N-malonyltransferase (464 aa).

Catalysis depends on proton acceptor residues His-191 and Asp-403.

The protein belongs to the plant acyltransferase family. As to quaternary structure, monomer. In terms of tissue distribution, mainly expressed in roots.

It localises to the cytoplasm. It carries out the reaction 17,18-epoxy-17-hydroxycur-19-ene + malonyl-CoA = prestrychnine + CoA. It functions in the pathway alkaloid biosynthesis. Malonylransferase involved in the biosynthesis of curare monoterpene indole alkaloids (MIAs), natural products such as strychnine, a neurotoxic compound used as a pesticide to control rodents, and its pharmacologically active derivatives, including brucine, used to regulate blood pressure. Curare alkaloids act as animal glycine receptor antagonists. Catalyzes the conversion of 17,18-epoxy-17-hydroxycur-19-ene (Wieland-Gumlich aldehyde) to prestrychnine, which is spontaneously converted into strychnine and isostrychnine. The protein is 17,18-epoxy-17-hydroxycur-19-ene N-malonyltransferase of Strychnos nux-vomica (Poison nut).